We begin with the raw amino-acid sequence, 326 residues long: uncharacterized protein (326 aa).

Solcar repeat units lie at residues 20-107, 120-219, and 231-322; these read QDSN…CKKK, LTNT…LREF, and KSNL…VCDS. The next 6 helical transmembrane spans lie at 24-40, 84-104, 126-143, 195-213, 237-254, and 297-316; these read IAFL…RTVV, GLNC…YEAC, LFSG…TYPL, VWPT…FAVY, LTIG…TYPF, and GLAA…WLVY.

The protein belongs to the mitochondrial carrier (TC 2.A.29) family.

It is found in the mitochondrion inner membrane. This is an uncharacterized protein from Saccharomyces cerevisiae (strain ATCC 204508 / S288c) (Baker's yeast).